We begin with the raw amino-acid sequence, 418 residues long: Histidine--tRNA ligase (418 aa).

The protein belongs to the class-II aminoacyl-tRNA synthetase family. Homodimer.

The protein resides in the cytoplasm. It carries out the reaction tRNA(His) + L-histidine + ATP = L-histidyl-tRNA(His) + AMP + diphosphate + H(+). In Dehalococcoides mccartyi (strain ATCC BAA-2100 / JCM 16839 / KCTC 5957 / BAV1), this protein is Histidine--tRNA ligase.